The following is a 374-amino-acid chain: GDSL esterase/lipase At1g71250 (374 aa).

An N-terminal signal peptide occupies residues 1–28; sequence MNTNRKKMKVHIGGYVLILALTVSVILQ. Serine 48 acts as the Nucleophile in catalysis. Asparagine 162 carries N-linked (GlcNAc...) asparagine glycosylation. Active-site residues include aspartate 338 and histidine 341.

The protein belongs to the 'GDSL' lipolytic enzyme family.

It localises to the secreted. The polypeptide is GDSL esterase/lipase At1g71250 (Arabidopsis thaliana (Mouse-ear cress)).